The sequence spans 463 residues: MFS-type transporter criB (463 aa).

A run of 11 helical transmembrane segments spans residues 5–27 (LVLSCGVIAGISGFLFGYDSGIM), 46–66 (MVGTIVAIMQAGGFFGCLTAG), 83–103 (VFVVVGGALQAAAYHTAMLLI), 106–126 (LVTGFGVGSLTMTVPVYQAEI), 141–161 (LMLAIGSAIANWTGYGCSFVN), 168–188 (MPLALQAVPGIVLFFGSYFLP), 256–276 (LFLGAGIWLMLNLTGINVINY), 293–313 (IFLSGVYGSVGAATTFLALFF), 323–343 (LMMANISQTATLIVMAGLTAA), 355–375 (VAMIFLFFVIYCSTWGPLSWV), and 402–422 (FYFLFVATNFISALVLLFLYP).

It belongs to the major facilitator superfamily. Sugar transporter (TC 2.A.1.1) family.

It localises to the membrane. Its function is as follows. MFS-type transporter; part of the gene cluster that mediates the biosynthesis of echinulin family alkaloid. This Aspergillus cristatus (Chinese Fuzhuan brick tea-fermentation fungus) protein is MFS-type transporter criB.